The primary structure comprises 476 residues: Glycogen synthase (476 aa).

An ADP-alpha-D-glucose-binding site is contributed by lysine 15.

Belongs to the glycosyltransferase 1 family. Bacterial/plant glycogen synthase subfamily.

It carries out the reaction [(1-&gt;4)-alpha-D-glucosyl](n) + ADP-alpha-D-glucose = [(1-&gt;4)-alpha-D-glucosyl](n+1) + ADP + H(+). It participates in glycan biosynthesis; glycogen biosynthesis. Functionally, synthesizes alpha-1,4-glucan chains using ADP-glucose. The chain is Glycogen synthase from Marinomonas sp. (strain MWYL1).